Here is a 176-residue protein sequence, read N- to C-terminus: dCTP deaminase (176 aa).

DCTP contacts are provided by residues 99–104 (RSTLAR) and D115. Residue E125 is the Proton donor/acceptor of the active site. Q163 contributes to the dCTP binding site.

Belongs to the dCTP deaminase family. Homotrimer.

It catalyses the reaction dCTP + H2O + H(+) = dUTP + NH4(+). It functions in the pathway pyrimidine metabolism; dUMP biosynthesis; dUMP from dCTP (dUTP route): step 1/2. Its function is as follows. Catalyzes the deamination of dCTP to dUTP. In Pyrobaculum arsenaticum (strain DSM 13514 / JCM 11321 / PZ6), this protein is dCTP deaminase.